We begin with the raw amino-acid sequence, 226 residues long: Enolase-phosphatase E1 (226 aa).

It belongs to the HAD-like hydrolase superfamily. MasA/MtnC family. Monomer. Mg(2+) is required as a cofactor.

It catalyses the reaction 5-methylsulfanyl-2,3-dioxopentyl phosphate + H2O = 1,2-dihydroxy-5-(methylsulfanyl)pent-1-en-3-one + phosphate. The protein operates within amino-acid biosynthesis; L-methionine biosynthesis via salvage pathway; L-methionine from S-methyl-5-thio-alpha-D-ribose 1-phosphate: step 3/6. Its pathway is amino-acid biosynthesis; L-methionine biosynthesis via salvage pathway; L-methionine from S-methyl-5-thio-alpha-D-ribose 1-phosphate: step 4/6. In terms of biological role, bifunctional enzyme that catalyzes the enolization of 2,3-diketo-5-methylthiopentyl-1-phosphate (DK-MTP-1-P) into the intermediate 2-hydroxy-3-keto-5-methylthiopentenyl-1-phosphate (HK-MTPenyl-1-P), which is then dephosphorylated to form the acireductone 1,2-dihydroxy-3-keto-5-methylthiopentene (DHK-MTPene). The protein is Enolase-phosphatase E1 of Shewanella sp. (strain W3-18-1).